The primary structure comprises 77 residues: ATP synthase subunit c (77 aa).

Transmembrane regions (helical) follow at residues 10–30 and 57–77; these read IAVA…FGNM and GLID…LFVL.

It belongs to the ATPase C chain family. As to quaternary structure, F-type ATPases have 2 components, F(1) - the catalytic core - and F(0) - the membrane proton channel. F(1) has five subunits: alpha(3), beta(3), gamma(1), delta(1), epsilon(1). F(0) has three main subunits: a(1), b(2) and c(10-14). The alpha and beta chains form an alternating ring which encloses part of the gamma chain. F(1) is attached to F(0) by a central stalk formed by the gamma and epsilon chains, while a peripheral stalk is formed by the delta and b chains.

Its subcellular location is the cell inner membrane. F(1)F(0) ATP synthase produces ATP from ADP in the presence of a proton or sodium gradient. F-type ATPases consist of two structural domains, F(1) containing the extramembraneous catalytic core and F(0) containing the membrane proton channel, linked together by a central stalk and a peripheral stalk. During catalysis, ATP synthesis in the catalytic domain of F(1) is coupled via a rotary mechanism of the central stalk subunits to proton translocation. In terms of biological role, key component of the F(0) channel; it plays a direct role in translocation across the membrane. A homomeric c-ring of between 10-14 subunits forms the central stalk rotor element with the F(1) delta and epsilon subunits. The polypeptide is ATP synthase subunit c (Pseudoalteromonas translucida (strain TAC 125)).